The sequence spans 1253 residues: MLEDTQLVWVRDAAEGYIQGRITEIGAKEFEVTPTDRKYPKRTCHFDDIHSSCDGPQDHDDNCELMLLNEATFLDNLKTRYYKDKIYTYVANILIAVNPYREIKELYAPDTIKKYNGRSLGELPPHVFAIADKAIRDMRVYKLSQSIIVSGESGAGKTESTKYLLKYLCYSHDSAGPIETKILDANPVLEAFGNAKTTRNNNSSRFGKFIEVHYDAKCQVVGGYISHYLLEKSRICTQSAEERNYHVFYMLLAGAPQQLRDKLSLGKPDDYRYLSGCTQYFANAKTEQLIPGSQKSKNHQQKGPLKDPIIDDYQHFHNLDKALGRLGLSDTEKLGIYSLVAAVLHLGNIAFEEIPDDVRGGCQVSEASEQSLTITSGLLGVDQTELRTALVSRVMQSKGGGFKGTVIMVPLKIYEASNARDALAKAIYSRLFDRIVGLINQSIPFQASNFYIGVLDIAGFEYFTVNSFEQFCINYCNEKLQKFFNDNILKNEQELYKREGLNVPEITFTDNQDIIELIEAKSNGIFTLLDEESKLPKPSYSHFTAEVHKSWANHYRLGLPRSSRLKAHRTLRDEEGFLVRHFAGAVCYNTEQFIEKNNDALHASLEGLVQECDNPLLQTLFPSGSSTSVRGKLNFISVGSKFKTQLGELMEKLEQNGTNFIRCIKPNSKMIDRQFEGSLALAQLKCSGTISVLELMEHGYPSRVLFADLYSMYKSVLPPELVSLPARTFCEAMFQSLNLSAKDFKFGITKVFFRPGKFVEFDRIMRSDPENMLAIVAKVKKWLIRSRWVKSALGALCVIKLRNRIIYRNKCVLIAQRIARGFLARKQHRPRYQGIGKINKIRTNTLKTIEIASGLKMGREEIISGVNDIYRQIDDAIKKIKMNPRITQREMDSMYTVVMANMNKLTVDLNTKLKEQQQAEEQERLRKIQEALEAERAAKEAEEQRQREEIENKRLKAEMETRRKAAEAQRLRQEEEDRRAALALQEQLEKEAKDDAKYRQQLEQERRDHELALRLANESNGQVEDSPPVIRNGVNDASPMGPNKLIRSENVRAQQQALGKQKYDLSKWKYSELRDAINTSCDIELLEACRQEFHRRLKVYHAWKAKNRKRTTMDENERAPRSVMEAAFKQPPLVQPIQEIVTAQHRYFRIPFMRANAPDNTKRGLWYAHFDGQWIARQMELHADKPPILLVAGTDDMQMCELSLEETGLTRKRGAEILEHEFNREWERNGGKAYKNLGAAKPNGPAAAMQKQQ.

Residues 3–54 (EDTQLVWVRDAAEGYIQGRITEIGAKEFEVTPTDRKYPKRTCHFDDIHSSCD) form the Myosin N-terminal SH3-like domain. In terms of domain architecture, Myosin motor spans 57-766 (QDHDDNCELM…KFVEFDRIMR (710 aa)). 151-158 (GESGAGKT) lines the ATP pocket. An actin-binding region spans residues 647-666 (GELMEKLEQNGTNFIRCIKP). Residues 808–837 (RNKCVLIAQRIARGFLARKQHRPRYQGIGK) form the IQ domain. A coiled-coil region spans residues 900 to 1022 (ANMNKLTVDL…LRLANESNGQ (123 aa)). Residues 1187-1193 (PILLVAG) are hydrophobic region. The segment at 1233-1253 (AYKNLGAAKPNGPAAAMQKQQ) is disordered.

It belongs to the TRAFAC class myosin-kinesin ATPase superfamily. Myosin family. Isoform B is present at a higher level in the head and gonads than in the thoraxes. Isoform 145 kDa is found only in the head. CLIP-190 and jar are coexpressed at several times in development and in a number of tissues, including embryonic axonal neuron processes and posterior pole.

The protein localises to the cytoplasm. It localises to the cytoskeleton. Its function is as follows. Myosin is a protein that binds to actin and has ATPase activity that is activated by actin. Together CLIP-190 and jar may coordinate the interaction between the actin and microtubule cytoskeleton. May link endocytic vesicles to microtubules and may be involved in transport in the early embryo and in the dynamic process of dorsal closure. It is believed that its function changes during the life cycle. This chain is Myosin heavy chain 95F (jar), found in Drosophila melanogaster (Fruit fly).